Reading from the N-terminus, the 164-residue chain is Large ribosomal subunit protein eL21x/eL21w (164 aa).

The protein belongs to the eukaryotic ribosomal protein eL21 family.

This is Large ribosomal subunit protein eL21x/eL21w (RPL21E) from Arabidopsis thaliana (Mouse-ear cress).